The primary structure comprises 308 residues: Reticulon-like protein 1 (308 aa).

Composition is skewed to polar residues over residues 1–17 (MSEQ…SVTA) and 41–66 (PSTE…IQNI). 2 disordered regions span residues 1–22 (MSEQ…DVAA) and 41–92 (PSTE…CPVS). The N-linked (GlcNAc...) asparagine glycan is linked to Asn-65. The segment covering 67-81 (SSSSSEPHHTSQSTP) has biased composition (low complexity). Asn-113 and Asn-135 each carry an N-linked (GlcNAc...) asparagine glycan. Positions 127–308 (LWSVLTWKNT…TETINTTVNK (182 aa)) constitute a Reticulon domain. 4 helical membrane passes run 138–158 (CSFS…WINL), 166–186 (FRYV…ASNG), 233–253 (PILT…SGFL), and 255–275 (YKSL…LYVC). A glycan (N-linked (GlcNAc...) asparagine) is linked at Asn-303.

Interacts with TTS1 and YOP1.

Its subcellular location is the endoplasmic reticulum membrane. It localises to the nucleus membrane. Required for the correct positioning of the cellular division plane by delimiting the actomyosin ring assembly at the cell equator. Overexpression causes cell lysis. This Schizosaccharomyces pombe (strain 972 / ATCC 24843) (Fission yeast) protein is Reticulon-like protein 1 (rtn1).